The sequence spans 120 residues: NAD(P)H-quinone oxidoreductase subunit 3, chloroplastic (120 aa).

The next 3 membrane-spanning stretches (helical) occupy residues 10–30 (FWAF…TSSL), 64–84 (MFAL…PWAM), and 89–109 (LGVL…IGLV).

It belongs to the complex I subunit 3 family. In terms of assembly, NDH is composed of at least 16 different subunits, 5 of which are encoded in the nucleus.

Its subcellular location is the plastid. The protein resides in the chloroplast thylakoid membrane. It catalyses the reaction a plastoquinone + NADH + (n+1) H(+)(in) = a plastoquinol + NAD(+) + n H(+)(out). It carries out the reaction a plastoquinone + NADPH + (n+1) H(+)(in) = a plastoquinol + NADP(+) + n H(+)(out). Functionally, NDH shuttles electrons from NAD(P)H:plastoquinone, via FMN and iron-sulfur (Fe-S) centers, to quinones in the photosynthetic chain and possibly in a chloroplast respiratory chain. The immediate electron acceptor for the enzyme in this species is believed to be plastoquinone. Couples the redox reaction to proton translocation, and thus conserves the redox energy in a proton gradient. The sequence is that of NAD(P)H-quinone oxidoreductase subunit 3, chloroplastic from Zygnema circumcarinatum (Green alga).